The following is a 286-amino-acid chain: Bifunctional protein FolD (286 aa).

Residues 166–168 (GAS) and I232 contribute to the NADP(+) site.

The protein belongs to the tetrahydrofolate dehydrogenase/cyclohydrolase family. As to quaternary structure, homodimer.

The catalysed reaction is (6R)-5,10-methylene-5,6,7,8-tetrahydrofolate + NADP(+) = (6R)-5,10-methenyltetrahydrofolate + NADPH. The enzyme catalyses (6R)-5,10-methenyltetrahydrofolate + H2O = (6R)-10-formyltetrahydrofolate + H(+). It participates in one-carbon metabolism; tetrahydrofolate interconversion. In terms of biological role, catalyzes the oxidation of 5,10-methylenetetrahydrofolate to 5,10-methenyltetrahydrofolate and then the hydrolysis of 5,10-methenyltetrahydrofolate to 10-formyltetrahydrofolate. The sequence is that of Bifunctional protein FolD from Vibrio parahaemolyticus serotype O3:K6 (strain RIMD 2210633).